We begin with the raw amino-acid sequence, 446 residues long: Exodeoxyribonuclease 7 large subunit (446 aa).

This sequence belongs to the XseA family. Heterooligomer composed of large and small subunits.

It localises to the cytoplasm. It catalyses the reaction Exonucleolytic cleavage in either 5'- to 3'- or 3'- to 5'-direction to yield nucleoside 5'-phosphates.. Bidirectionally degrades single-stranded DNA into large acid-insoluble oligonucleotides, which are then degraded further into small acid-soluble oligonucleotides. The protein is Exodeoxyribonuclease 7 large subunit of Streptococcus gordonii (strain Challis / ATCC 35105 / BCRC 15272 / CH1 / DL1 / V288).